The primary structure comprises 111 residues: Photosystem II reaction center Psb28 protein (111 aa).

It belongs to the Psb28 family. In terms of assembly, part of the photosystem II complex.

Its subcellular location is the cellular thylakoid membrane. In Gloeothece citriformis (strain PCC 7424) (Cyanothece sp. (strain PCC 7424)), this protein is Photosystem II reaction center Psb28 protein.